Here is a 118-residue protein sequence, read N- to C-terminus: MIYGIGIDITNIDRFKTLHNPATFIQKVLTPTEFDEFEAKKGQRAYEFLAGHFSVKESYSKAYGTGLGKKLNFQDIEINYDGVGKPKIVKHPFSGTVHVSISHSDHHVVTQVILEGDN.

Asp8 and Glu57 together coordinate Mg(2+).

Belongs to the P-Pant transferase superfamily. AcpS family. It depends on Mg(2+) as a cofactor.

The protein resides in the cytoplasm. It catalyses the reaction apo-[ACP] + CoA = holo-[ACP] + adenosine 3',5'-bisphosphate + H(+). Transfers the 4'-phosphopantetheine moiety from coenzyme A to a Ser of acyl-carrier-protein. This Pediococcus pentosaceus (strain ATCC 25745 / CCUG 21536 / LMG 10740 / 183-1w) protein is Holo-[acyl-carrier-protein] synthase.